The following is a 555-amino-acid chain: Vetispiradiene synthase 1 (555 aa).

Mg(2+) is bound by residues aspartate 308, aspartate 312, aspartate 451, threonine 455, and glutamate 459. A DDXXD motif motif is present at residues 308–312 (DDTFD).

Belongs to the terpene synthase family. Tpsa subfamily. Requires Mg(2+) as cofactor.

It is found in the cytoplasm. The enzyme catalyses (2E,6E)-farnesyl diphosphate = (-)-vetispiradiene + diphosphate. The protein operates within secondary metabolite biosynthesis; terpenoid biosynthesis. In terms of biological role, sesquiterpene synthase that catalyzes the formation of vetispiradiene from trans,trans-farnesyl diphosphate. The initial internal cyclization produces the monocyclic intermediate germacrene A. The protein is Vetispiradiene synthase 1 of Hyoscyamus muticus (Egyptian henbane).